Reading from the N-terminus, the 311-residue chain is MRRNCTLVTEFILLGLTSRRELQILLFTLFLAIYMVTVAGNLGMIVLIQANAWLHMPMYFFLSHLSFVDLCFSSNVTPKMLEIFLSEKKSISYPACLVQCYLFIALVHVEIYILAVMAFDRYMAICNPLLYGSRMSKSVCSFLITVPYVYGALTGLMETMWTYNLAFCGPNEINHFYCADPPLIKLACSDTYNKELSMFIVAGWNLSFSLFIICISYLYIFPAILKIRSTEGRQKAFSTCGSHLTAVTIFYATLFFMYLRPPSKESVEQGKMVAVFYTTVIPMLNLIIYSLRNKNVKEALIKELSMKIYFS.

Over 1 to 24 the chain is Extracellular; the sequence is MRRNCTLVTEFILLGLTSRRELQI. Asn4 carries N-linked (GlcNAc...) asparagine glycosylation. Residues 25–45 form a helical membrane-spanning segment; the sequence is LLFTLFLAIYMVTVAGNLGMI. Topologically, residues 46–53 are cytoplasmic; it reads VLIQANAW. A helical membrane pass occupies residues 54–74; that stretch reads LHMPMYFFLSHLSFVDLCFSS. Topologically, residues 75 to 98 are extracellular; that stretch reads NVTPKMLEIFLSEKKSISYPACLV. Cysteines 96 and 188 form a disulfide. The chain crosses the membrane as a helical span at residues 99-119; it reads QCYLFIALVHVEIYILAVMAF. Residues 120 to 138 lie on the Cytoplasmic side of the membrane; the sequence is DRYMAICNPLLYGSRMSKS. A helical membrane pass occupies residues 139–159; it reads VCSFLITVPYVYGALTGLMET. The Extracellular segment spans residues 160 to 195; the sequence is MWTYNLAFCGPNEINHFYCADPPLIKLACSDTYNKE. Residues 196–216 traverse the membrane as a helical segment; sequence LSMFIVAGWNLSFSLFIICIS. At 217-236 the chain is on the cytoplasmic side; the sequence is YLYIFPAILKIRSTEGRQKA. Residues 237–257 traverse the membrane as a helical segment; it reads FSTCGSHLTAVTIFYATLFFM. Topologically, residues 258–270 are extracellular; the sequence is YLRPPSKESVEQG. The helical transmembrane segment at 271–291 threads the bilayer; the sequence is KMVAVFYTTVIPMLNLIIYSL. Residues 292–311 lie on the Cytoplasmic side of the membrane; the sequence is RNKNVKEALIKELSMKIYFS.

This sequence belongs to the G-protein coupled receptor 1 family.

It is found in the cell membrane. Its function is as follows. Odorant receptor. This chain is Olfactory receptor 5M8 (OR5M8), found in Homo sapiens (Human).